A 414-amino-acid chain; its full sequence is 5-aminolevulinate synthase (414 aa).

Positions 22, 133, and 152 each coordinate substrate. Positions 185, 213, and 241 each coordinate pyridoxal 5'-phosphate. K244 is a catalytic residue. Residue K244 is modified to N6-(pyridoxal phosphate)lysine. Pyridoxal 5'-phosphate is bound by residues T273 and T274. A substrate-binding site is contributed by T359.

It belongs to the class-II pyridoxal-phosphate-dependent aminotransferase family. In terms of assembly, homodimer. It depends on pyridoxal 5'-phosphate as a cofactor.

The catalysed reaction is succinyl-CoA + glycine + H(+) = 5-aminolevulinate + CO2 + CoA. It functions in the pathway porphyrin-containing compound metabolism; protoporphyrin-IX biosynthesis; 5-aminolevulinate from glycine: step 1/1. The protein is 5-aminolevulinate synthase (hemA) of Rickettsia prowazekii (strain Madrid E).